Consider the following 864-residue polypeptide: Calphotin (864 aa).

Residues 816–858 form a leucine-zipper region; it reads LQTTDVSLLAIAATLDAIGEKLKDQKARNQQVMDRLCEIEKIL.

Homodimer. As to expression, soma and axons of photoreceptor cells of compound eyes and ocelli.

Its subcellular location is the cytoplasm. Its function is as follows. Plays important roles in both rhabdomere development and in photoreceptor cell survival. Might function as a calcium-sequestering 'sponge' to regulate the amount of free cytoplasmic calcium. It binds 0.3 mole of Ca(2+) per mole of protein. This Drosophila melanogaster (Fruit fly) protein is Calphotin (Cpn).